A 420-amino-acid polypeptide reads, in one-letter code: Calreticulin (420 aa).

The N-terminal stretch at 1–18 is a signal peptide; sequence MKWGVVAVLATLVVAASA. C106 and C140 are joined by a disulfide. An alpha-D-glucoside contacts are provided by Y110, K112, Y131, and D138. 7 repeat units span residues 194 to 205, 213 to 224, 230 to 241, 248 to 259, 263 to 273, 277 to 287, and 291 to 301. The 4 X approximate repeats stretch occupies residues 194-259; the sequence is VASGSLYEDW…DAKKPEDWDD (66 aa). Basic and acidic residues predominate over residues 210–220; that stretch reads TIKDPKASKPE. Residues 210-272 are disordered; sequence TIKDPKASKP…GTWEPPMIPN (63 aa). Over residues 221-230 the composition is skewed to acidic residues; that stretch reads DWDEREEIAD. Residues 263-301 form a 3 X approximate repeats region; the sequence is GTWEPPMIPNPEYKGEWKAKMIKNPAYKGIWVAPDIDNP. Residue E321 participates in an alpha-D-glucoside binding. Over residues 357-376 the composition is skewed to basic and acidic residues; that stretch reads EEKAMFDKVKKEEDEKKAKD. Residues 357–420 form a disordered region; sequence EEKAMFDKVK…EEEESGHDEL (64 aa). Acidic residues-rich tracts occupy residues 385–398 and 411–420; these read EAAEEEDDEYEDKE and EEEESGHDEL. Residues 417-420 carry the Prevents secretion from ER motif; that stretch reads HDEL.

Belongs to the calreticulin family.

Its subcellular location is the endoplasmic reticulum lumen. Functionally, molecular calcium-binding chaperone promoting folding, oligomeric assembly and quality control in the ER via the calreticulin/calnexin cycle. This lectin may interact transiently with almost all of the monoglucosylated glycoproteins that are synthesized in the ER. The protein is Calreticulin of Chlamydomonas reinhardtii (Chlamydomonas smithii).